A 338-amino-acid chain; its full sequence is Ketol-acid reductoisomerase (NADP(+)) (338 aa).

The 181-residue stretch at 1–181 (MKVFYDKDCD…GGGRAGIIET (181 aa)) folds into the KARI N-terminal Rossmann domain. NADP(+) is bound by residues 24–27 (YGSQ), Arg47, and Ser52. His107 is an active-site residue. Gly133 is a binding site for NADP(+). Residues 182 to 327 (NFREETETDL…AKLRAMMPWI (146 aa)) form the KARI C-terminal knotted domain. Asp190, Glu194, Glu226, and Glu230 together coordinate Mg(2+). Ser251 is a substrate binding site.

The protein belongs to the ketol-acid reductoisomerase family. The cofactor is Mg(2+).

It catalyses the reaction (2R)-2,3-dihydroxy-3-methylbutanoate + NADP(+) = (2S)-2-acetolactate + NADPH + H(+). The catalysed reaction is (2R,3R)-2,3-dihydroxy-3-methylpentanoate + NADP(+) = (S)-2-ethyl-2-hydroxy-3-oxobutanoate + NADPH + H(+). It functions in the pathway amino-acid biosynthesis; L-isoleucine biosynthesis; L-isoleucine from 2-oxobutanoate: step 2/4. It participates in amino-acid biosynthesis; L-valine biosynthesis; L-valine from pyruvate: step 2/4. Functionally, involved in the biosynthesis of branched-chain amino acids (BCAA). Catalyzes an alkyl-migration followed by a ketol-acid reduction of (S)-2-acetolactate (S2AL) to yield (R)-2,3-dihydroxy-isovalerate. In the isomerase reaction, S2AL is rearranged via a Mg-dependent methyl migration to produce 3-hydroxy-3-methyl-2-ketobutyrate (HMKB). In the reductase reaction, this 2-ketoacid undergoes a metal-dependent reduction by NADPH to yield (R)-2,3-dihydroxy-isovalerate. This chain is Ketol-acid reductoisomerase (NADP(+)), found in Janthinobacterium sp. (strain Marseille) (Minibacterium massiliensis).